Consider the following 226-residue polypeptide: ATP synthase subunit a (226 aa).

Helical transmembrane passes span 18–38, 79–99, 105–125, 134–154, 179–199, and 201–221; these read FITG…SLGA, LAGT…IPGF, SWSF…FEGI, FAHF…IEII, LIML…VLFF, and GILQ…GAVL.

The protein belongs to the ATPase A chain family. In terms of assembly, F-type ATPases have 2 components, CF(1) - the catalytic core - and CF(0) - the membrane proton channel. CF(1) has five subunits: alpha(3), beta(3), gamma(1), delta(1), epsilon(1). CF(0) has three main subunits: a(1), b(2) and c(9-12). The alpha and beta chains form an alternating ring which encloses part of the gamma chain. CF(1) is attached to CF(0) by a central stalk formed by the gamma and epsilon chains, while a peripheral stalk is formed by the delta and b chains.

It is found in the cell inner membrane. Functionally, key component of the proton channel; it plays a direct role in the translocation of protons across the membrane. This is ATP synthase subunit a from Helicobacter pylori (strain J99 / ATCC 700824) (Campylobacter pylori J99).